A 266-amino-acid polypeptide reads, in one-letter code: Putative carbamate hydrolase RutD (266 aa).

Residues 15 to 128 (AVLLSSGLGG…NAHSARCFDA (114 aa)) enclose the AB hydrolase-1 domain.

Belongs to the AB hydrolase superfamily. Hydrolase RutD family.

The catalysed reaction is carbamate + 2 H(+) = NH4(+) + CO2. Its function is as follows. Involved in pyrimidine catabolism. May facilitate the hydrolysis of carbamate, a reaction that can also occur spontaneously. This chain is Putative carbamate hydrolase RutD, found in Variovorax paradoxus (strain S110).